We begin with the raw amino-acid sequence, 242 residues long: Ribonuclease 3 (242 aa).

The region spanning 7 to 136 (LEALQNLLGY…LLASIYLDGG (130 aa)) is the RNase III domain. Glu49 provides a ligand contact to Mg(2+). The active site involves Asp53. Residues Asp122 and Glu125 each contribute to the Mg(2+) site. The active site involves Glu125. A DRBM domain is found at 167 to 236 (DYKTQLQELT…AEKALQIIAA (70 aa)).

Belongs to the ribonuclease III family. In terms of assembly, homodimer. Mg(2+) is required as a cofactor.

The protein resides in the cytoplasm. It catalyses the reaction Endonucleolytic cleavage to 5'-phosphomonoester.. In terms of biological role, digests double-stranded RNA. Involved in the processing of primary rRNA transcript to yield the immediate precursors to the large and small rRNAs (23S and 16S). Processes some mRNAs, and tRNAs when they are encoded in the rRNA operon. Processes pre-crRNA and tracrRNA of type II CRISPR loci if present in the organism. The polypeptide is Ribonuclease 3 (Syntrophobacter fumaroxidans (strain DSM 10017 / MPOB)).